The primary structure comprises 252 residues: Triosephosphate isomerase (252 aa).

10–12 (NWK) serves as a coordination point for substrate. Histidine 96 (electrophile) is an active-site residue. Residue glutamate 168 is the Proton acceptor of the active site. Residues glycine 174, serine 214, and 235-236 (GG) each bind substrate.

Belongs to the triosephosphate isomerase family. Homodimer.

Its subcellular location is the cytoplasm. The enzyme catalyses D-glyceraldehyde 3-phosphate = dihydroxyacetone phosphate. Its pathway is carbohydrate biosynthesis; gluconeogenesis. It participates in carbohydrate degradation; glycolysis; D-glyceraldehyde 3-phosphate from glycerone phosphate: step 1/1. Involved in the gluconeogenesis. Catalyzes stereospecifically the conversion of dihydroxyacetone phosphate (DHAP) to D-glyceraldehyde-3-phosphate (G3P). The chain is Triosephosphate isomerase from Lactobacillus acidophilus (strain ATCC 700396 / NCK56 / N2 / NCFM).